We begin with the raw amino-acid sequence, 555 residues long: Glutamine--tRNA ligase (555 aa).

The short motif at 35-45 is the 'HIGH' region element; sequence PEPNGYLHIGH. ATP contacts are provided by residues 36–38 and 42–48; these read EPN and HIGHAKS. L-glutamine is bound by residues D68 and Y213. ATP contacts are provided by residues T232, 262–263, and 270–272; these read RL and MSK. The 'KMSKS' region motif lies at 269 to 273; it reads VMSKR.

Belongs to the class-I aminoacyl-tRNA synthetase family. As to quaternary structure, monomer.

It is found in the cytoplasm. The enzyme catalyses tRNA(Gln) + L-glutamine + ATP = L-glutaminyl-tRNA(Gln) + AMP + diphosphate. This chain is Glutamine--tRNA ligase, found in Photobacterium profundum (strain SS9).